A 156-amino-acid chain; its full sequence is AP-1 complex subunit sigma-1 (156 aa).

Belongs to the adaptor complexes small subunit family. Adaptor protein complex 1 (AP-1) is a heterotetramer composed of two large adaptins (gamma-type subunit and beta-type subunit), a medium adaptin (mu-type subunit) and a small adaptin (sigma-type subunit).

The protein localises to the golgi apparatus. It is found in the trans-Golgi network. The protein resides in the cytoplasmic vesicle. It localises to the clathrin-coated vesicle membrane. Its function is as follows. Subunit of clathrin-associated adaptor protein complex 1 that plays a role in protein sorting in the trans-Golgi network (TGN) and endosomes. The AP complexes mediate the recruitment of clathrin to membranes and the recognition of sorting signals within the cytosolic tails of transmembrane cargo molecules. Also involved in early steps of phagocytosis and macropinocytosis. The protein is AP-1 complex subunit sigma-1 (ap1s1) of Dictyostelium discoideum (Social amoeba).